Consider the following 500-residue polypeptide: Lysine--tRNA ligase (500 aa).

Mg(2+) contacts are provided by Glu-410 and Glu-417.

The protein belongs to the class-II aminoacyl-tRNA synthetase family. Homodimer. Mg(2+) serves as cofactor.

The protein resides in the cytoplasm. The enzyme catalyses tRNA(Lys) + L-lysine + ATP = L-lysyl-tRNA(Lys) + AMP + diphosphate. The protein is Lysine--tRNA ligase of Mycoplasma mycoides subsp. mycoides SC (strain CCUG 32753 / NCTC 10114 / PG1).